We begin with the raw amino-acid sequence, 570 residues long: Potassium-transporting ATPase potassium-binding subunit (570 aa).

A run of 11 helical transmembrane segments spans residues 7-27, 65-85, 95-115, 135-155, 179-199, 254-274, 286-306, 383-403, 422-442, 489-509, and 528-548; these read AEIA…GVFL, AYAL…YAVL, PQGF…SFIT, LVLT…AAAL, LYLL…LGLP, LTNL…FFAF, ALVI…YATE, GVAI…LMVG, ILAV…AAVL, LGIA…AIAG, and GGLF…LQFF.

Belongs to the KdpA family. As to quaternary structure, the system is composed of three essential subunits: KdpA, KdpB and KdpC.

Its subcellular location is the cell inner membrane. Its function is as follows. Part of the high-affinity ATP-driven potassium transport (or Kdp) system, which catalyzes the hydrolysis of ATP coupled with the electrogenic transport of potassium into the cytoplasm. This subunit binds the periplasmic potassium ions and delivers the ions to the membrane domain of KdpB through an intramembrane tunnel. The protein is Potassium-transporting ATPase potassium-binding subunit of Caulobacter vibrioides (strain ATCC 19089 / CIP 103742 / CB 15) (Caulobacter crescentus).